We begin with the raw amino-acid sequence, 121 residues long: UPF0102 protein VP0448 (121 aa).

The protein belongs to the UPF0102 family.

The sequence is that of UPF0102 protein VP0448 from Vibrio parahaemolyticus serotype O3:K6 (strain RIMD 2210633).